A 330-amino-acid chain; its full sequence is Aspartate--ammonia ligase (330 aa).

This sequence belongs to the class-II aminoacyl-tRNA synthetase family. AsnA subfamily.

It is found in the cytoplasm. It catalyses the reaction L-aspartate + NH4(+) + ATP = L-asparagine + AMP + diphosphate + H(+). The protein operates within amino-acid biosynthesis; L-asparagine biosynthesis; L-asparagine from L-aspartate (ammonia route): step 1/1. The sequence is that of Aspartate--ammonia ligase from Cronobacter sakazakii (strain ATCC BAA-894) (Enterobacter sakazakii).